The chain runs to 354 residues: 3-dehydroquinate synthase (354 aa).

NAD(+)-binding positions include 100 to 104 (GATGD), 124 to 125 (TT), lysine 136, lysine 145, and 163 to 166 (FLKT). Glutamate 178, histidine 242, and histidine 256 together coordinate Zn(2+).

This sequence belongs to the sugar phosphate cyclases superfamily. Dehydroquinate synthase family. The cofactor is NAD(+). Requires Co(2+) as cofactor. It depends on Zn(2+) as a cofactor.

It is found in the cytoplasm. The catalysed reaction is 7-phospho-2-dehydro-3-deoxy-D-arabino-heptonate = 3-dehydroquinate + phosphate. It participates in metabolic intermediate biosynthesis; chorismate biosynthesis; chorismate from D-erythrose 4-phosphate and phosphoenolpyruvate: step 2/7. In terms of biological role, catalyzes the conversion of 3-deoxy-D-arabino-heptulosonate 7-phosphate (DAHP) to dehydroquinate (DHQ). This Staphylococcus aureus (strain COL) protein is 3-dehydroquinate synthase.